A 419-amino-acid chain; its full sequence is O-antigen ligase (419 aa).

The Cytoplasmic portion of the chain corresponds to 1–19 (MLTSFKLHSLKPYTLKSSM). The chain crosses the membrane as a helical span at residues 20 to 38 (ILEIITYILCFFSMIIAFV). Topologically, residues 39 to 43 (DNTFS) are periplasmic. A helical transmembrane segment spans residues 44 to 61 (IKIYNITAIVCLLSLILR). Topologically, residues 62–71 (GRQENYNIKN) are cytoplasmic. Residues 72-91 (LILPLSIFLIGLLDLIWYSA) form a helical membrane-spanning segment. Over 92 to 107 (FKVDNSPFRATYHSYL) the chain is Periplasmic. The chain crosses the membrane as a helical span at residues 108–125 (NTAKIFIFGSFIVFLTLT). The Cytoplasmic segment spans residues 126–134 (SQLKSKKES). A helical membrane pass occupies residues 135 to 153 (VLYTLYSLSFLIAGYAMYI). Over 154 to 167 (NSIHENDRISFGVG) the chain is Periplasmic. Residues 168-187 (TATGAAYSTMLIGIVSGVAI) traverse the membrane as a helical segment. Topologically, residues 188–194 (LYTKKNH) are cytoplasmic. The helical transmembrane segment at 195–211 (PFLFLLNSCAVLYVLAL) threads the bilayer. The Periplasmic segment spans residues 212 to 216 (TQTRA). A helical transmembrane segment spans residues 217 to 234 (TLLLFPIICVAALIAYYN). The Cytoplasmic segment spans residues 235-240 (KSPKKF). The helical transmembrane segment at 241–259 (TSSIVLLIAILASIVIIFN) threads the bilayer. At 260-348 (KPIQNRYNEA…NEIIEAGSLK (89 aa)) the chain is on the periplasmic side. Residues 349-367 (GLMGIFSTLFLYFSLFYIA) form a helical membrane-spanning segment. The Cytoplasmic portion of the chain corresponds to 368–372 (YKKRA). The chain crosses the membrane as a helical span at residues 373 to 391 (LGLLILTLGIVGIGLSDVI). Topologically, residues 392-396 (IWARS) are periplasmic. The helical transmembrane segment at 397–412 (IPIIIISAIVLLLVIN) threads the bilayer. The Cytoplasmic portion of the chain corresponds to 413–419 (NRNNTIN).

Homodimer.

It localises to the cell inner membrane. The catalysed reaction is a lipid-linked O antigen + a lipid A-core oligosaccharide = a lipopolysaccharide + a polyisoprenyl diphosphate.. The protein operates within bacterial outer membrane biogenesis; lipopolysaccharide biosynthesis. With respect to regulation, activity does not require ATP and magnesium ions. In terms of biological role, transferase involved in the biosynthesis of the lipopolysaccharide (LPS). In vitro, catalyzes the transfer of a polymerized O-antigen molecule from its polyprenyl diphosphate membrane anchor to a terminal sugar of the lipid A-core oligosaccharide, finalizing the biosynthesis of the lipopolysaccharide. The enzyme is functional and can be used to give diverse hybrid O-antigens in vitro, but K12 strains do not produce the O-antigen in vivo due to mutations in the rfb gene cluster. K12 strains are phenotypically rough, their lipopolysaccharide having a complete core structure, but no O-antigen. In highly mucoid K12 strains, WaaL can ligate colanic acid (CA or M-antigen) repeats to a significant proportion of lipopolysaccharide (LPS) core acceptor molecules, forming the LPS glycoform M(LPS). The attachment point was identified as O-7 of the L-glycero-D-manno-heptose of the outer LPS core, the same position used for O-antigen ligation. Cannot catalyze ATP hydrolysis in vitro. The protein is O-antigen ligase of Escherichia coli (strain K12).